The sequence spans 400 residues: Nicotinate phosphoribosyltransferase (400 aa).

Histidine 220 is modified (phosphohistidine; by autocatalysis).

Belongs to the NAPRTase family. Transiently phosphorylated on a His residue during the reaction cycle. Phosphorylation strongly increases the affinity for substrates and increases the rate of nicotinate D-ribonucleotide production. Dephosphorylation regenerates the low-affinity form of the enzyme, leading to product release.

The catalysed reaction is nicotinate + 5-phospho-alpha-D-ribose 1-diphosphate + ATP + H2O = nicotinate beta-D-ribonucleotide + ADP + phosphate + diphosphate. The protein operates within cofactor biosynthesis; NAD(+) biosynthesis; nicotinate D-ribonucleotide from nicotinate: step 1/1. Functionally, catalyzes the synthesis of beta-nicotinate D-ribonucleotide from nicotinate and 5-phospho-D-ribose 1-phosphate at the expense of ATP. This Escherichia coli O45:K1 (strain S88 / ExPEC) protein is Nicotinate phosphoribosyltransferase.